We begin with the raw amino-acid sequence, 152 residues long: 3-hydroxyacyl-[acyl-carrier-protein] dehydratase FabZ (152 aa).

The active site involves histidine 54.

The protein belongs to the thioester dehydratase family. FabZ subfamily.

It localises to the cytoplasm. The enzyme catalyses a (3R)-hydroxyacyl-[ACP] = a (2E)-enoyl-[ACP] + H2O. Its function is as follows. Involved in unsaturated fatty acids biosynthesis. Catalyzes the dehydration of short chain beta-hydroxyacyl-ACPs and long chain saturated and unsaturated beta-hydroxyacyl-ACPs. The protein is 3-hydroxyacyl-[acyl-carrier-protein] dehydratase FabZ of Buchnera aphidicola subsp. Schizaphis graminum (strain Sg).